Consider the following 42-residue polypeptide: SELKDIIAAVTPCKGADFELQALKIRQPQGDEVLVKXXATGM.

This sequence belongs to the zinc-containing alcohol dehydrogenase family. As to quaternary structure, homodimer. Zn(2+) serves as cofactor.

The catalysed reaction is an aromatic primary alcohol + NAD(+) = an aromatic aldehyde + NADH + H(+). Its function is as follows. Oxidizes primary alcohols with an aromatic or cyclohex-1-ene ring. It is highly specific for benzyl alcohol. The polypeptide is Aryl-alcohol dehydrogenase (Acinetobacter guillouiae (Acinetobacter genomosp. 11)).